We begin with the raw amino-acid sequence, 2367 residues long: Toxin B (2367 aa).

A four-helical bundle region spans residues 2–91 (SLVNRKQLEK…EILELKNSNL (90 aa)). In terms of domain architecture, GT44 spans 96 to 469 (KNLHFIWIGG…YPEANTTITL (374 aa)). The interval 96–469 (KNLHFIWIGG…YPEANTTITL (374 aa)) is glucosyltransferase region. UDP-alpha-D-glucose contacts are provided by residues 101–103 (IWI), Asn-139, 269–273 (SDILR), and 286–288 (DVD). Mg(2+)-binding residues include Asp-286, Asp-288, and Glu-516. Position 519 to 521 (519 to 521 (SLW)) interacts with UDP-alpha-D-glucose. The tract at residues 545-800 (GEDDNLDFSQ…KSKNLPELST (256 aa)) is autoprocessing region. Zn(2+) is bound by residues Glu-546 and Asp-547. The Peptidase C80 domain maps to 568–775 (SSSTKSSERG…EESIIKDISS (208 aa)). Positions 578, 601, and 648 each coordinate 1D-myo-inositol hexakisphosphate. Residue His-654 coordinates Zn(2+). The active-site For protease activity is His-654. Cys-699 serves as the catalytic Nucleophile; for protease activity. His-758 is a Zn(2+) binding site. Lys-765, Lys-776, and Lys-793 together coordinate 1D-myo-inositol hexakisphosphate. The tract at residues 801–1501 (LLQEIRNNSN…VVLIIKVYMD (701 aa)) is translocation region. Interaction with host frizzled receptors FZD1, FZD2 and FZD7 stretches follow at residues 1434–1439 (LKTLMA), 1487–1512 (SELS…YYSN), and 1598–1600 (SLK). 19 Cell wall-binding repeats span residues 1833 to 1852 (VSGL…PIKN), 1854 to 1873 (ITGF…DNGG), 1876 to 1895 (SVGE…NGVL), 1926 to 1945 (FTGK…NYRA), 1946 to 1965 (AIEW…DTGR), 1967 to 1986 (FKGL…DGIM), 1987 to 2006 (QKGF…SGVM), 2007 to 2026 (KSGY…NGEM), 2057 to 2076 (YSGI…SFTA), 2077 to 2097 (VVGW…NTAE), 2099 to 2118 (SIGI…SGIM), 2119 to 2138 (QIGF…SGIV), 2139 to 2158 (ESGM…NGLV), 2209 to 2231 (ETGW…EAKK), 2233 to 2252 (YKGI…NGIM), 2253 to 2272 (RTGL…DGEM), 2273 to 2292 (QYGY…DGIM), 2323 to 2342 (YTGW…EYIA), and 2343 to 2362 (ATGS…DTAQ). Positions 1835–2367 (GLVYINDSLY…PDTAQLVISE (533 aa)) are receptor-binding (CROPS) region.

The protein belongs to the clostridial glucosylating toxin (LCGT) family. As to quaternary structure, interacts with host FZD1. Interacts with host FZD2; interaction promotes toxin entry into host cell and occupies the binding site for Wnt-adducted palmitoleate in FZD2, leading to prevent Wnt-binding and downstream Wnt signaling. Interacts with host FZD7. Interacts with host CSPG4. Interacts with host NECTIN3/PVRL3. Requires Zn(2+) as cofactor. It depends on Mn(2+) as a cofactor. The cofactor is Mg(2+). Post-translationally, undergoes autocatalytic cleavage to release the N-terminal part (Glucosyltransferase TcdB), which constitutes the active part of the toxin, in the host cytosol. 1D-myo-inositol hexakisphosphate-binding (InsP6) activates the peptidase C80 domain and promotes autoprocessing.

Its subcellular location is the secreted. It localises to the host endosome membrane. The protein localises to the host cytoplasm. The protein resides in the host cytosol. It is found in the host cell membrane. It catalyses the reaction L-threonyl-[protein] + UDP-alpha-D-glucose = 3-O-(alpha-D-glucosyl)-L-threonyl-[protein] + UDP + H(+). Its activity is regulated as follows. Protease activity is activated upon binding to 1D-myo-inositol hexakisphosphate (InsP6), which induces conformational reorganization. Its function is as follows. Precursor of a cytotoxin that targets and disrupts the colonic epithelium, inducing the host inflammatory and innate immune responses and resulting in diarrhea and pseudomembranous colitis. TcdB constitutes the main toxin that mediates the pathology of C.difficile infection, an opportunistic pathogen that colonizes the colon when the normal gut microbiome is disrupted. Compared to TcdA, TcdB is more virulent and more important for inducing the host inflammatory and innate immune responses. This form constitutes the precursor of the toxin: it enters into host cells and mediates autoprocessing to release the active toxin (Glucosyltransferase TcdB) into the host cytosol. Targets colonic epithelia by binding to the frizzled receptors FZD1, FZD2 and FZD7, and enters host cells via clathrin-mediated endocytosis. Frizzled receptors constitute the major host receptors in the colonic epithelium, but other receptors, such as CSPG4 or NECTIN3/PVRL3, have been identified. Binding to carbohydrates and sulfated glycosaminoglycans on host cell surface also contribute to entry into cells. Once entered into host cells, acidification in the endosome promotes the membrane insertion of the translocation region and formation of a pore, leading to translocation of the GT44 and peptidase C80 domains across the endosomal membrane. This activates the peptidase C80 domain and autocatalytic processing, releasing the N-terminal part (Glucosyltransferase TcdB), which constitutes the active part of the toxin, in the cytosol. In terms of biological role, active form of the toxin, which is released into the host cytosol following autoprocessing and inactivates small GTPases. Acts by mediating monoglucosylation of small GTPases of the Rho family (Rac1, RhoA, RhoB, RhoC, RhoG and Cdc42) in host cells at the conserved threonine residue located in the switch I region ('Thr-37/35'), using UDP-alpha-D-glucose as the sugar donor. Monoglucosylation of host small GTPases completely prevents the recognition of the downstream effector, blocking the GTPases in their inactive form, leading to actin cytoskeleton disruption and cell death, resulting in the loss of colonic epithelial barrier function. The polypeptide is Toxin B (Clostridioides difficile (Peptoclostridium difficile)).